We begin with the raw amino-acid sequence, 2677 residues long: Probable helicase senataxin (2677 aa).

A Glycyl lysine isopeptide (Lys-Gly) (interchain with G-Cter in SUMO1) cross-link involves residue K339. A phosphoserine mark is found at S615, S642, and S878. Residue K894 forms a Glycyl lysine isopeptide (Lys-Gly) (interchain with G-Cter in SUMO2) linkage. Residues S911, S947, S956, S1017, and S1019 each carry the phosphoserine modification. Glycyl lysine isopeptide (Lys-Gly) (interchain with G-Cter in SUMO2) cross-links involve residues K1056 and K1063. Disordered regions lie at residues 1158–1219 (KKPK…TTVS) and 1237–1258 (PVSK…RSSN). The segment covering 1176–1187 (PSSSVRNEGQSD) has biased composition (polar residues). Basic and acidic residues predominate over residues 1188–1205 (TNKRDLVGNDFKSIDRRT). Polar residues predominate over residues 1206-1219 (STPNSRIQRATTVS). The residue at position 1330 (S1330) is a Phosphoserine. Residues K1340 and K1341 each participate in a glycyl lysine isopeptide (Lys-Gly) (interchain with G-Cter in SUMO2) cross-link. Positions 1351–1385 (QRQIRPKSQKNRRRLSDCESTDVKRAGSHTAQNSD) are disordered. Positions 1354 to 1363 (IRPKSQKNRR) are enriched in basic residues. A compositionally biased stretch (basic and acidic residues) spans 1364–1375 (RLSDCESTDVKR). S1366 is subject to Phosphoserine. A Glycyl lysine isopeptide (Lys-Gly) (interchain with G-Cter in SUMO2) cross-link involves residue K1415. Phosphoserine is present on S1489. A disordered region spans residues 1579–1604 (FRKPGLPPPASKPLRPTTKIFSSKST). Phosphoserine occurs at positions 1621, 1623, and 1663. An ATP-binding site is contributed by 1963–1970 (GPPGTGKS). Positions 2070-2087 (KKELPSHVQAMHKRKEFL) match the Bipartite nuclear localization signal motif. A coiled-coil region spans residues 2105 to 2136 (REIQRQELDENISKVSKERQELASKIKEVQGR). Position 2474 is a phosphothreonine (T2474). Disordered regions lie at residues 2474 to 2496 (THPP…SKLD), 2556 to 2577 (WDPQ…EPGF), and 2597 to 2677 (LSSH…RKLL). Over residues 2560–2573 (PSSPQHPGATPPTG) the composition is skewed to pro residues. Basic and acidic residues predominate over residues 2628–2671 (ELCHRREARAFSEGEQEKCGSETHHTRRNSRWDKRTLEQEDSSS). The interval 2661–2677 (KRTLEQEDSSSKKRKLL) is necessary for nuclear localization.

Belongs to the DNA2/NAM7 helicase family. Homodimer. Interacts with PER2; the interaction inhibits termination of circadian target genes. Interacts with CHD4, POLR2A, PRKDC and TRIM28. Interacts with UBE2I. Interacts (via N-terminus domain) with EXOSC9 (via C-terminus region); the interaction enhances SETX sumoylation. Interacts with NCL (via N-terminus domain). Interacts with PABPN1, PABPC1 and SF3B1. Interacts with SMN1/SMN2 and POLR2A; SMN1/SMN2 recruits SETX to POLR2A. Ubiquitinated. Post-translationally, sumoylated preferentially with SUMO2 or SUMO3. Highly expressed in skeletal muscle. Expressed in heart, fibroblast, placenta and liver. Weakly expressed in brain and lung. Expressed in the cortex of the kidney (highly expressed in tubular epithelial cells but low expression in the glomerulus).

The protein resides in the nucleus. It is found in the nucleoplasm. Its subcellular location is the nucleolus. It localises to the cytoplasm. The protein localises to the chromosome. The protein resides in the telomere. It is found in the cell projection. Its subcellular location is the axon. It localises to the growth cone. Functionally, probable RNA/DNA helicase involved in diverse aspects of RNA metabolism and genomic integrity. Plays a role in transcription regulation by its ability to modulate RNA Polymerase II (Pol II) binding to chromatin and through its interaction with proteins involved in transcription. Contributes to the mRNA splicing efficiency and splice site selection. Required for the resolution of R-loop RNA-DNA hybrid formation at G-rich pause sites located downstream of the poly(A) site, allowing XRN2 recruitment and XRN2-mediated degradation of the downstream cleaved RNA and hence efficient RNA polymerase II (RNAp II) transcription termination. Required for the 3' transcriptional termination of PER1 and CRY2, thus playing an important role in the circadian rhythm regulation. Involved in DNA double-strand breaks damage response generated by oxidative stress. In association with RRP45, targets the RNA exosome complex to sites of transcription-induced DNA damage. Plays a role in the development and maturation of germ cells: essential for male meiosis, acting at the interface of transcription and meiotic recombination, and in the process of gene silencing during meiotic sex chromosome inactivation (MSCI). May be involved in telomeric stability through the regulation of telomere repeat-containing RNA (TERRA) transcription. Plays a role in neurite outgrowth in hippocampal cells through FGF8-activated signaling pathways. Inhibits retinoic acid-induced apoptosis. In Homo sapiens (Human), this protein is Probable helicase senataxin.